Here is a 242-residue protein sequence, read N- to C-terminus: 1-(5-phosphoribosyl)-5-[(5-phosphoribosylamino)methylideneamino] imidazole-4-carboxamide isomerase (242 aa).

The Proton acceptor role is filled by Asp8. Asp129 functions as the Proton donor in the catalytic mechanism.

It belongs to the HisA/HisF family.

The protein resides in the cytoplasm. The enzyme catalyses 1-(5-phospho-beta-D-ribosyl)-5-[(5-phospho-beta-D-ribosylamino)methylideneamino]imidazole-4-carboxamide = 5-[(5-phospho-1-deoxy-D-ribulos-1-ylimino)methylamino]-1-(5-phospho-beta-D-ribosyl)imidazole-4-carboxamide. The protein operates within amino-acid biosynthesis; L-histidine biosynthesis; L-histidine from 5-phospho-alpha-D-ribose 1-diphosphate: step 4/9. The sequence is that of 1-(5-phosphoribosyl)-5-[(5-phosphoribosylamino)methylideneamino] imidazole-4-carboxamide isomerase from Clostridium botulinum (strain ATCC 19397 / Type A).